Reading from the N-terminus, the 983-residue chain is MASPHKPWRAEYAKSSRSSCKTCKSVINKENFRLGKLVQSTHFDGIMPMWNHASCILKKTKQIKSVDDVEGIESLRWEDQQKIRKYVESGAGSNTSTSTGTSTSSTANNAKLEYGIEVSQTSRAGCRKCSEKILKGEVRIFSKPEGPGNKGLMWHHAKCFLEMSSSTELESLSGWRSIPDSDQEALLPLVKKALPAAKTETAEARQTNSRAGTKRKNDSVDNEKSKLAKSSFDMSTSGALQPCSKEKEMEAQTKELWDLKDDLKKYVTSAELREMLEVNEQSTRGSELDLRDKCADGMMFGPLALCPMCSGHLSFSGGLYRCHGYISEWSKCSHSTLDPDRIKGKWKIPDETENQFLLKWNKSQKSVKPKRILRPVLSGETSQGQGSKDATDSSRSERLADLKVSIAGNTKERQPWKKRIEEAGAEFHANVKKGTSCLVVCGLTDIRDAEMRKARRMKVAIVREDYLVDCFKKQRKLPFDKYKIEDTSESLVTVKVKGRSAVHEASGLQEHCHILEDGNSIYNTTLSMSDLSTGINSYYILQIIQEDKGSDCYVFRKWGRVGNEKIGGNKVEEMSKSDAVHEFKRLFLEKTGNTWESWEQKTNFQKQPGKFLPLDIDYGVNKQVAKKEPFQTSSNLAPSLIELMKMLFDVETYRSAMMEFEINMSEMPLGKLSKHNIQKGFEALTEIQRLLTESDPQPTMKESLLVDASNRFFTMIPSIHPHIIRDEDDFKSKVKMLEALQDIEIASRIVGFDVDSTESLDDKYKKLHCDISPLPHDSEDYRLIEKYLNTTHAPTHTEWSLELEEVFALEREGEFDKYAPHREKLGNKMLLWHGSRLTNFVGILNQGLRIAPPEAPATGYMFGKGIYFADLVSKSAQYCYTCKKNPVGLMLLSEVALGEIHELTKAKYMDKPPRGKHSTKGLGKKVPQDSEFAKWRGDVTVPCGKPVSSKVKASELMYNEYIVYDTAQVKLQFLLKVRFKHKR.

PARP-type zinc fingers lie at residues 8-91 and 114-194; these read WRAE…ESGA and YGIE…KKAL. Zn(2+)-binding residues include Cys-20, Cys-23, His-52, Cys-55, Cys-126, Cys-129, His-156, and Cys-159. A disordered region spans residues 197 to 246; that stretch reads AKTETAEARQTNSRAGTKRKNDSVDNEKSKLAKSSFDMSTSGALQPCSKE. Residues 215-226 are compositionally biased toward basic and acidic residues; sequence RKNDSVDNEKSK. Positions 236–375 constitute a PADR1 zinc-binding domain; the sequence is TSGALQPCSK…SVKPKRILRP (140 aa). The interval 301 to 345 is zinc ribbon; that stretch reads GPLALCPMCSGHLSFSGGLYRCHGYISEWSKCSHSTLDPDRIKGK. Positions 306, 309, 322, and 332 each coordinate Zn(2+). Residues 369 to 397 form a disordered region; the sequence is PKRILRPVLSGETSQGQGSKDATDSSRSE. Residues 379 to 388 show a composition bias toward polar residues; that stretch reads GETSQGQGSK. In terms of domain architecture, BRCT spans 394–484; that stretch reads SRSERLADLK…RKLPFDKYKI (91 aa). The region spanning 511-611 is the WGR domain; it reads HCHILEDGNS…TNFQKQPGKF (101 aa). The PARP alpha-helical domain maps to 633–751; it reads SSNLAPSLIE…DIEIASRIVG (119 aa). The PARP catalytic domain maps to 758–983; sequence ESLDDKYKKL…LLKVRFKHKR (226 aa).

This sequence belongs to the ARTD/PARP family.

The protein resides in the nucleus. It catalyses the reaction NAD(+) + (ADP-D-ribosyl)n-acceptor = nicotinamide + (ADP-D-ribosyl)n+1-acceptor + H(+).. It carries out the reaction L-aspartyl-[protein] + NAD(+) = 4-O-(ADP-D-ribosyl)-L-aspartyl-[protein] + nicotinamide. The enzyme catalyses L-glutamyl-[protein] + NAD(+) = 5-O-(ADP-D-ribosyl)-L-glutamyl-[protein] + nicotinamide. Its function is as follows. Involved in the base excision repair (BER) pathway, by catalyzing the poly(ADP-ribosyl)ation of a limited number of acceptor proteins involved in chromatin architecture and in DNA metabolism. This modification follows DNA damages and appears as an obligatory step in a detection/signaling pathway leading to the reparation of DNA strand breaks. The sequence is that of Poly [ADP-ribose] polymerase 1 (PARP1) from Arabidopsis thaliana (Mouse-ear cress).